We begin with the raw amino-acid sequence, 141 residues long: Hemoglobin subunit alpha (141 aa).

In terms of domain architecture, Globin spans valine 1 to arginine 141. Serine 3 carries the phosphoserine modification. The residue at position 7 (lysine 7) is an N6-succinyllysine. Position 8 is a phosphothreonine (threonine 8). Lysine 11 carries the post-translational modification N6-succinyllysine. Position 16 is an N6-acetyllysine; alternate (lysine 16). An N6-succinyllysine; alternate modification is found at lysine 16. The residue at position 24 (tyrosine 24) is a Phosphotyrosine. The residue at position 35 (serine 35) is a Phosphoserine. Lysine 40 is subject to N6-succinyllysine. Serine 49 carries the phosphoserine modification. An O2-binding site is contributed by histidine 58. Histidine 87 is a binding site for heme b. Serine 102 carries the post-translational modification Phosphoserine. At threonine 108 the chain carries Phosphothreonine. Residues serine 124 and serine 131 each carry the phosphoserine modification. Phosphothreonine is present on threonine 134. Serine 138 is subject to Phosphoserine.

Belongs to the globin family. As to quaternary structure, heterotetramer of two alpha chains and two beta chains. Red blood cells.

Involved in oxygen transport from the lung to the various peripheral tissues. Its function is as follows. Hemopressin acts as an antagonist peptide of the cannabinoid receptor CNR1. Hemopressin-binding efficiently blocks cannabinoid receptor CNR1 and subsequent signaling. This is Hemoglobin subunit alpha (HBA) from Myotis velifer (Mouse-eared bat).